A 276-amino-acid chain; its full sequence is tRNA (guanine-N(7)-)-methyltransferase (276 aa).

The interval 1 to 36 is disordered; sequence MAAETRNVAGAEAPPPQKRYYRQRAHSNPMADHTLR. The residue at position 2 (Ala2) is an N-acetylalanine. Ser27 is subject to Phosphoserine; by PKB/AKT1 and RPS6KA3. S-adenosyl-L-homocysteine contacts are provided by Gly84, Glu107, Ile108, Arg109, Asn140, Ala141, and Leu160. Gly84 and Glu107 together coordinate S-adenosyl-L-methionine. Arg109, Asn140, Ala141, and Leu160 together coordinate S-adenosyl-L-methionine. The active site involves Asp163. The tract at residues 164 to 172 is alphaC helix; that stretch reads PHFKRTKHK. Thr238 and Glu240 together coordinate S-adenosyl-L-homocysteine. S-adenosyl-L-methionine is bound by residues Thr238 and Glu240. The interval 238 to 246 is alpha6 helix; it reads TEEGKKVLR.

The protein belongs to the class I-like SAM-binding methyltransferase superfamily. TrmB family. Catalytic component of the METTL1-WDR4 complex, composed of METTL1 and WDR4. Post-translationally, phosphorylation at Ser-27 by PKB/AKT1 inactivates its methyltransferase activity via a steric interference mechanism in the active site that locally disrupts the catalytic center. Phosphorylation at Ser-27 does not affect the interaction with WDR4. Ubiquitous.

It is found in the nucleus. It carries out the reaction guanosine(46) in tRNA + S-adenosyl-L-methionine = N(7)-methylguanosine(46) in tRNA + S-adenosyl-L-homocysteine. The enzyme catalyses a guanosine in mRNA + S-adenosyl-L-methionine = an N(7)-methylguanosine in mRNA + S-adenosyl-L-homocysteine. It catalyses the reaction a guanosine in miRNA + S-adenosyl-L-methionine = an N(7)-methylguanosine in miRNA + S-adenosyl-L-homocysteine. It functions in the pathway tRNA modification; N(7)-methylguanine-tRNA biosynthesis. Catalytic component of METTL1-WDR4 methyltransferase complex that mediates the formation of N(7)-methylguanine in a subset of RNA species, such as tRNAs, mRNAs and microRNAs (miRNAs). Catalyzes the formation of N(7)-methylguanine at position 46 (m7G46) in a large subset of tRNAs that contain the 5'-RAGGU-3' motif within the variable loop. M7G46 interacts with C13-G22 in the D-loop to stabilize tRNA tertiary structure and protect tRNAs from decay. Also acts as a methyltransferase for a subset of internal N(7)-methylguanine in mRNAs. Internal N(7)-methylguanine methylation of mRNAs in response to stress promotes their relocalization to stress granules, thereby suppressing their translation. Also methylates a specific subset of miRNAs, such as let-7. N(7)-methylguanine methylation of let-7 miRNA promotes let-7 miRNA processing by disrupting an inhibitory secondary structure within the primary miRNA transcript (pri-miRNA). Acts as a regulator of embryonic stem cell self-renewal and differentiation. The protein is tRNA (guanine-N(7)-)-methyltransferase of Homo sapiens (Human).